Reading from the N-terminus, the 178-residue chain is Translation initiation factor IF-3 (178 aa).

A disordered region spans residues 1–20 (MRRPFRATPVQKDGPRSNRD).

This sequence belongs to the IF-3 family. Monomer.

The protein localises to the cytoplasm. Its function is as follows. IF-3 binds to the 30S ribosomal subunit and shifts the equilibrium between 70S ribosomes and their 50S and 30S subunits in favor of the free subunits, thus enhancing the availability of 30S subunits on which protein synthesis initiation begins. The chain is Translation initiation factor IF-3 from Brucella anthropi (strain ATCC 49188 / DSM 6882 / CCUG 24695 / JCM 21032 / LMG 3331 / NBRC 15819 / NCTC 12168 / Alc 37) (Ochrobactrum anthropi).